Reading from the N-terminus, the 372-residue chain is Bifunctional enzyme IspD/IspF (372 aa).

The tract at residues 1–210 (MLDLSLIMLG…LNLNSPSNDI (210 aa)) is 2-C-methyl-D-erythritol 4-phosphate cytidylyltransferase. The tract at residues 211 to 372 (FCGNGFDVHA…LKYFNWRNVL (162 aa)) is 2-C-methyl-D-erythritol 2,4-cyclodiphosphate synthase. A divalent metal cation contacts are provided by D217 and H219. 4-CDP-2-C-methyl-D-erythritol 2-phosphate-binding positions include 217-219 (DVH) and 243-244 (HS). Residue H251 participates in a divalent metal cation binding. Residues 265 to 267 (DIG), 270 to 274 (YPDND), 341 to 344 (TTTE), F348, and R351 contribute to the 4-CDP-2-C-methyl-D-erythritol 2-phosphate site.

This sequence in the N-terminal section; belongs to the IspD/TarI cytidylyltransferase family. IspD subfamily. The protein in the C-terminal section; belongs to the IspF family. It depends on a divalent metal cation as a cofactor.

It carries out the reaction 2-C-methyl-D-erythritol 4-phosphate + CTP + H(+) = 4-CDP-2-C-methyl-D-erythritol + diphosphate. It catalyses the reaction 4-CDP-2-C-methyl-D-erythritol 2-phosphate = 2-C-methyl-D-erythritol 2,4-cyclic diphosphate + CMP. It participates in isoprenoid biosynthesis; isopentenyl diphosphate biosynthesis via DXP pathway; isopentenyl diphosphate from 1-deoxy-D-xylulose 5-phosphate: step 2/6. It functions in the pathway isoprenoid biosynthesis; isopentenyl diphosphate biosynthesis via DXP pathway; isopentenyl diphosphate from 1-deoxy-D-xylulose 5-phosphate: step 4/6. Functionally, bifunctional enzyme that catalyzes the formation of 4-diphosphocytidyl-2-C-methyl-D-erythritol from CTP and 2-C-methyl-D-erythritol 4-phosphate (MEP) (IspD), and catalyzes the conversion of 4-diphosphocytidyl-2-C-methyl-D-erythritol 2-phosphate (CDP-ME2P) to 2-C-methyl-D-erythritol 2,4-cyclodiphosphate (ME-CPP) with a corresponding release of cytidine 5-monophosphate (CMP) (IspF). This chain is Bifunctional enzyme IspD/IspF, found in Campylobacter fetus subsp. fetus (strain 82-40).